The chain runs to 147 residues: D-aminoacyl-tRNA deacylase (147 aa).

The Gly-cisPro motif, important for rejection of L-amino acids motif lies at 136–137 (GP).

It belongs to the DTD family. In terms of assembly, homodimer.

It localises to the cytoplasm. The enzyme catalyses glycyl-tRNA(Ala) + H2O = tRNA(Ala) + glycine + H(+). It carries out the reaction a D-aminoacyl-tRNA + H2O = a tRNA + a D-alpha-amino acid + H(+). An aminoacyl-tRNA editing enzyme that deacylates mischarged D-aminoacyl-tRNAs. Also deacylates mischarged glycyl-tRNA(Ala), protecting cells against glycine mischarging by AlaRS. Acts via tRNA-based rather than protein-based catalysis; rejects L-amino acids rather than detecting D-amino acids in the active site. By recycling D-aminoacyl-tRNA to D-amino acids and free tRNA molecules, this enzyme counteracts the toxicity associated with the formation of D-aminoacyl-tRNA entities in vivo and helps enforce protein L-homochirality. The protein is D-aminoacyl-tRNA deacylase of Streptococcus equi subsp. equi (strain 4047).